The chain runs to 185 residues: Small ribosomal subunit protein uS7 (185 aa).

The protein belongs to the universal ribosomal protein uS7 family. Part of the 30S ribosomal subunit.

Its function is as follows. One of the primary rRNA binding proteins, it binds directly to 16S rRNA where it nucleates assembly of the head domain of the 30S subunit. Is located at the subunit interface close to the decoding center. This is Small ribosomal subunit protein uS7 from Methanothrix thermoacetophila (strain DSM 6194 / JCM 14653 / NBRC 101360 / PT) (Methanosaeta thermophila).